A 1138-amino-acid chain; its full sequence is Solute carrier family 12 member 5 (1138 aa).

Disordered regions lie at residues 1–62 (MSRR…KGRE) and 96–116 (QGSR…KPVQ). Topologically, residues 1–98 (MSRRFTVTSL…ANYTNLPQGS (98 aa)) are cytoplasmic. Residues 21–45 (PESRRHSVADPRRLPREDVKGDGNP) show a composition bias toward basic and acidic residues. Positions 46–55 (KESSPFINST) are enriched in polar residues. Residue Thr-57 is modified to Phosphothreonine. Residues 98–111 (SREHEEAENNEGGK) are compositionally biased toward basic and acidic residues. Residues 99–120 (REHEEAENNEGGKKKPVQAPRM) form a discontinuously helical membrane-spanning segment. Residue Lys-113 participates in K(+) binding. Topologically, residues 121–129 (GTFMGVYLP) are extracellular. The chain crosses the membrane as a helical span at residues 130 to 151 (CLQNIFGVILFLRLTWVVGIAG). The Cytoplasmic portion of the chain corresponds to 152 to 174 (IMESFCMVFICCSCTMLTAISMS). Residues 175 to 203 (AIATNGVVPAGGSYYMISRSLGPEFGGAV) form a helical membrane-spanning segment. Residue Ala-184 coordinates chloride. Residues 204–229 (GLCFYLGTTFAGAMYILGTIEILLAY) are Extracellular-facing. Transmembrane regions (helical) follow at residues 230–250 (LFPA…AAML) and 251–276 (NNMR…KYVN). The Extracellular portion of the chain corresponds to 277–402 (KFALVFLGCV…ERRGMPSVGL (126 aa)). Residues Cys-310 and Cys-325 are joined by a disulfide bond. N-linked (GlcNAc...) asparagine glycosylation is found at Asn-314, Asn-333, Asn-351, and Asn-362. A disulfide bond links Cys-345 and Cys-354. The helical transmembrane segment at 403-420 (ADGTPVDMDHPYVFSDMT) threads the bilayer. Met-410 serves as a coordination point for K(+). 2 residues coordinate chloride: Tyr-414 and Val-415. Residues 421–429 (SYFTLLVGI) lie on the Cytoplasmic side of the membrane. The helical transmembrane segment at 430-453 (YFPSVTGIMAGSNRSGDLRDAQKS) threads the bilayer. Position 446 (Asp-446) interacts with K(+). The Extracellular segment spans residues 454-485 (IPTGTILAIATTSAVYISSVVLFGACIEGVVL). Residues 486–513 (RDKFGEAVNGNLVVGTLAWPSPWVIVIG) form a helical membrane-spanning segment. Topologically, residues 514–534 (SFFSTCGAGLQSLTGAPRLLQ) are cytoplasmic. The next 2 membrane-spanning stretches (helical) occupy residues 535 to 555 (AISR…KANG) and 556 to 578 (EPTW…ASLD). Residue Glu-569 participates in chloride binding. The Cytoplasmic portion of the chain corresponds to 579-592 (EVAPILSMFFLMCY). Helical transmembrane passes span 593-615 (MFVN…PRFR) and 616-632 (YYHW…CLAL). Over 633 to 1138 (MFICSWYYAL…GGREVITIYS (506 aa)) the chain is Cytoplasmic. Positions 667 to 681 (GIRGLSLSAARYALL) are scissor helix. Position 929 is a phosphothreonine; by OXSR1 and STK39 (Thr-929). The disordered stretch occupies residues 943-1051 (HLTKNERERE…GPSPVSSEGI (109 aa)). Residues 945-962 (TKNEREREIQSITDESRG) are compositionally biased toward basic and acidic residues. Residues 982-994 (TACDNEEKPEEEV) show a composition bias toward acidic residues. A compositionally biased stretch (low complexity) spans 1001–1012 (SAPSCPSSSPSP). The span at 1019–1041 (ERETDPEVHLTWTKDKSVAEKNK) shows a compositional bias: basic and acidic residues. Thr-1029 is modified (phosphothreonine; by OXSR1 and STK39). Phosphoserine is present on residues Ser-1044, Ser-1047, and Ser-1048.

Belongs to the SLC12A transporter family. K/Cl co-transporter subfamily. As to quaternary structure, homodimer; adopts a domain-swap conformation at the scissor helices connecting the transmembrane domain and C-terminal domain. Heterodimer with K-Cl cotransporters SLC12A6 and SLC12A7. Interacts with AP2A1. Phosphorylated at Thr-929 and Thr-1029 by OXSR1/OSR1 and STK39/SPAK downstream of WNK kinases (WNK1, WNK2, WNK3 or WNK4), inhibiting the potassium-chloride cotransport activity. Expressed in brainstem, spinal cord and olfactory bulb of 17 dpc embryos. Expressed in all parts of the brain and spinal cord in postnatal day 14 mice. As to expression, expressed in brainstem and spinal cord of 17 dpc embryos. Expressed in all parts of the brain and spinal cord in postnatal day 14 mice.

Its subcellular location is the cell membrane. The protein localises to the cell projection. It localises to the dendrite. It carries out the reaction K(+)(in) + chloride(in) = K(+)(out) + chloride(out). Its activity is regulated as follows. Inhibited following phosphorylation by OXSR1/OSR1 and STK39/SPAK: phosphorylation takes place downstream of WNK kinases (WNK1, WNK2, WNK3 or WNK4) in response to hyperosmotic stress and subsequent cell shrinkage. Functionally, mediates electroneutral potassium-chloride cotransport in mature neurons and is required for neuronal Cl(-) homeostasis. As major extruder of intracellular chloride, it establishes the low neuronal Cl(-) levels required for chloride influx after binding of GABA-A and glycine to their receptors, with subsequent hyperpolarization and neuronal inhibition. Involved in the regulation of dendritic spine formation and maturation. The sequence is that of Solute carrier family 12 member 5 (Slc12a5) from Mus musculus (Mouse).